Reading from the N-terminus, the 412-residue chain is Branched-chain alpha-ketoacid dehydrogenase kinase (412 aa).

Residues 1–30 constitute a mitochondrion transit peptide; that stretch reads MILASVLGSGPRGGPPLRPLLGPALSLRAR. At S31 the chain carries Phosphoserine. Position 52 is a phosphoserine; by autocatalysis (S52). The Histidine kinase domain maps to 159 to 404; the sequence is LDDHKDVVTL…DVYLRLRHID (246 aa). N6-acetyllysine is present on residues K192 and K233. ATP contacts are provided by N279 and D315. Residue N279 participates in Mg(2+) binding. Positions 328, 330, and 333 each coordinate K(+). Residues T334 and T335 each coordinate ATP. A phosphoserine mark is found at S356 and S360. H364, G367, and L370 together coordinate ATP. G367 contributes to the K(+) binding site.

It belongs to the PDK/BCKDK protein kinase family. In terms of assembly, homodimer. Homotetramer. Dimerizes through interaction of two opposing nucleotide-binding domains. Interacts with E2 component of the branched-chain alpha-ketoacid dehydrogenase (BCKDH) complex. Competes with BCKDK for binding to the E2 component; this interaction is modulated by branched-chain alpha-keto acids. At steady state, BCKDH holoenzyme contains BCKDK and BCKDHA is phosphorylated. In response to high levels of branched-chain alpha-keto acids, the inhibitory BCKDK is replaced by activating PPM1K leading to BCKDHA dephosphorylation and BCAA degradation. Post-translationally, autophosphorylated.

It localises to the mitochondrion matrix. Its subcellular location is the mitochondrion. It carries out the reaction L-seryl-[3-methyl-2-oxobutanoate dehydrogenase] + ATP = O-phospho-L-seryl-[3-methyl-2-oxobutanoate dehydrogenase] + ADP + H(+). The enzyme catalyses L-seryl-[protein] + ATP = O-phospho-L-seryl-[protein] + ADP + H(+). Serine/threonine-protein kinase component of macronutrients metabolism. Forms a functional kinase and phosphatase pair with PPM1K, serving as a metabolic regulatory node that coordinates branched-chain amino acids (BCAAs) with glucose and lipid metabolism via two distinct phosphoprotein targets: mitochondrial BCKDHA subunit of the branched-chain alpha-ketoacid dehydrogenase (BCKDH) complex and cytosolic ACLY, a lipogenic enzyme of Krebs cycle. Phosphorylates and inactivates mitochondrial BCKDH complex a multisubunit complex consisting of three multimeric components each involved in different steps of BCAA catabolism: E1 composed of BCKDHA and BCKDHB, E2 core composed of DBT monomers, and E3 composed of DLD monomers. Associates with the E2 component of BCKDH complex and phosphorylates BCKDHA on Ser-347, leading to conformational changes that interrupt substrate channeling between E1 and E2 and inactivates the BCKDH complex. Phosphorylates ACLY on Ser-455 in response to changes in cellular carbohydrate abundance such as occurs during fasting to feeding metabolic transition. Refeeding stimulates MLXIPL/ChREBP transcription factor, leading to increased BCKDK to PPM1K expression ratio, phosphorylation and activation of ACLY that ultimately results in the generation of malonyl-CoA and oxaloacetate immediate substrates of de novo lipogenesis and glucogenesis, respectively. Recognizes phosphosites having SxxE/D canonical motif. This chain is Branched-chain alpha-ketoacid dehydrogenase kinase (BCKDK), found in Bos taurus (Bovine).